The following is a 698-amino-acid chain: Elongation factor G (698 aa).

The tr-type G domain maps to 10 to 285 (ASTRNIGIMA…AVVDFLPNPL (276 aa)). GTP contacts are provided by residues 19–26 (AHIDAGKT), 83–87 (DTPGH), and 137–140 (NKMD).

It belongs to the TRAFAC class translation factor GTPase superfamily. Classic translation factor GTPase family. EF-G/EF-2 subfamily.

The protein localises to the cytoplasm. Functionally, catalyzes the GTP-dependent ribosomal translocation step during translation elongation. During this step, the ribosome changes from the pre-translocational (PRE) to the post-translocational (POST) state as the newly formed A-site-bound peptidyl-tRNA and P-site-bound deacylated tRNA move to the P and E sites, respectively. Catalyzes the coordinated movement of the two tRNA molecules, the mRNA and conformational changes in the ribosome. The chain is Elongation factor G from Frankia alni (strain DSM 45986 / CECT 9034 / ACN14a).